A 1577-amino-acid chain; its full sequence is High molecular weight form of myosin-1 (1577 aa).

The Myosin motor domain occupies Lys75 to Asn751. Position 119 is an N6,N6,N6-trimethyllysine (Lys119). Gly168–Thr175 contributes to the ATP binding site. 2 actin-binding regions span residues Leu628–Ser650 and Gln730–Arg744. Residues Glu755 to Pro782 enclose the IQ domain. The region spanning Trp1261–Lys1401 is the MyTH4 domain. Disordered stretches follow at residues Ser1442–Ala1466 and Gln1483–Glu1516. Low complexity-rich tracts occupy residues Pro1444–Ala1466 and Gln1483–Ala1497. The region spanning Glu1519–Ile1577 is the SH3 domain.

This sequence belongs to the TRAFAC class myosin-kinesin ATPase superfamily. Myosin family. In terms of assembly, myosin I heavy chain is single-headed.

This Acanthamoeba castellanii (Amoeba) protein is High molecular weight form of myosin-1.